Reading from the N-terminus, the 231-residue chain is mRNA-decapping enzyme subunit 1 (231 aa).

A disordered region spans residues 92-120 (QNGSNNIQVNNGSDNSNRNSSGNGNSYKS). Positions 101–120 (NNGSDNSNRNSSGNGNSYKS) are enriched in low complexity.

The protein belongs to the DCP1 family. In terms of assembly, component of the decapping complex composed of DCP1 and DCP2. Interacts with mRNAs, DHH1, LSM1, LSM2, LSM3, LSM4, LSM5, LSM6, LSM7, and the cap-binding proteins PAB1 and TIF4632/eIF-4G. Post-translationally, phosphorylated.

It is found in the cytoplasm. The protein resides in the P-body. In terms of biological role, component of the decapping complex necessary for the degradation of mRNAs, both in normal mRNA turnover and in nonsense-mediated mRNA decay. Removes the 7-methyl guanine cap structure from mRNA molecules, yielding a 5'-phosphorylated mRNA fragment and 7m-GDP. Decapping is the major pathway of mRNA degradation in yeast. It occurs through deadenylation, decapping and subsequent 5' to 3' exonucleolytic decay of the transcript body. DCP1 is activated by the DEAD-box helicase DHH1 and destabilizes the eIF-4F cap-binding complex from the mRNA. The sequence is that of mRNA-decapping enzyme subunit 1 (DCP1) from Saccharomyces cerevisiae (strain ATCC 204508 / S288c) (Baker's yeast).